Reading from the N-terminus, the 81-residue chain is Defensin-like protein 45 (81 aa).

A signal peptide spans 1-27 (MAITKTSATFVLLIILAASLSNFNVLA). Intrachain disulfides connect C40–C79, C44–C67, C53–C77, and C57–C78.

It belongs to the DEFL family.

The protein localises to the secreted. This Arabidopsis thaliana (Mouse-ear cress) protein is Defensin-like protein 45.